The chain runs to 834 residues: Probable basic-leucine zipper transcription factor D (834 aa).

Residues 83 to 160 form a disordered region; sequence NNNNMLNDHS…SNNNSSSEGE (78 aa). Residues 90-111 are compositionally biased toward polar residues; it reads DHSSSPMRVPNSSPSLYNNSIE. Residues 119–157 show a composition bias toward low complexity; the sequence is DNSNNNNNNNNNINVNDINVNDINSNSTNNNESNNNSSS. Positions 211–246 form a coiled coil; the sequence is SEQQQQQQQQQQQQQQQQQQQQQQQQQHQHLLQEHQ. Residues 378–405 form a disordered region; that stretch reads VVDPPTHNQEDERNVKKQRRLIKNRESA. The 64-residue stretch at 391–454 folds into the bZIP domain; it reads NVKKQRRLIK…KQLAAQNSNS (64 aa). Residues 393 to 402 are basic motif; that stretch reads KKQRRLIKNR. The tract at residues 407–414 is leucine-zipper; the sequence is LSRMRKKI. Disordered stretches follow at residues 455 to 504 and 550 to 712; these read NNNS…QQQS and LSMS…KTPQ. The span at 550–595 shows a compositional bias: polar residues; it reads LSMSDSESSPQKSLRLSSNHHSLPDGTFNTIPIDQQTTATTNTKSL. 2 stretches are compositionally biased toward low complexity: residues 616–651 and 694–707; these read NNNN…NNNN and TTTT…TTST.

It belongs to the bZIP family.

Its subcellular location is the nucleus. Its function is as follows. Probable transcriptional regulator. The sequence is that of Probable basic-leucine zipper transcription factor D (bzpD) from Dictyostelium discoideum (Social amoeba).